Reading from the N-terminus, the 132-residue chain is MARDSLSDAGLHFDELNKLRILDPDVSQQTTELKEECRDFVDKIGHFQKVVGGLIELVDELAKETENEKMKAIGARNLLKSIAKQREAQQQQLYALIAEKKMQLERYRIEYDALCKVEAEQNEFIDQFNLQK.

Residues 87 to 112 (EAQQQQLYALIAEKKMQLERYRIEYD) are a coiled coil.

The protein resides in the golgi apparatus. It localises to the cis-Golgi network. Its subcellular location is the cytoplasm. The protein localises to the cytoskeleton. It is found in the microtubule organizing center. The protein resides in the centrosome. It localises to the centriole. Its subcellular location is the cell projection. The protein localises to the cilium. Involved in ciliary process assembly. May play a role in the trafficking of ciliary membrane proteins from the Golgi complex to the cilium. Regulates the platelet-derived growth factor receptor-alpha (PDGFRA) signaling pathway. Plays an important role in spermatogenesis, particularly spermiogenesis, when germ cells form flagella. This Xenopus laevis (African clawed frog) protein is Intraflagellar transport protein 20 homolog A (ift20-a).